Consider the following 613-residue polypeptide: Zinc finger protein 665 (613 aa).

18 consecutive C2H2-type zinc fingers follow at residues Y113–H135, Y141–H163, Y169–H191, Y197–H219, Y225–H247, Y253–H275, Y281–H303, Y309–H331, F337–H359, Y365–H387, Y393–H415, Y421–H443, Y449–H471, Y477–H499, Y505–H527, Y533–H555, Y561–H583, and Y589–H611.

It belongs to the krueppel C2H2-type zinc-finger protein family.

Its subcellular location is the nucleus. Its function is as follows. May be involved in transcriptional regulation. This is Zinc finger protein 665 (ZNF665) from Pongo abelii (Sumatran orangutan).